A 310-amino-acid polypeptide reads, in one-letter code: Ribosomal RNA small subunit methyltransferase H (310 aa).

Residues 32 to 34, Asp52, Phe79, Asp100, and Gln107 each bind S-adenosyl-L-methionine; that span reads GGH.

The protein belongs to the methyltransferase superfamily. RsmH family.

The protein localises to the cytoplasm. It carries out the reaction cytidine(1402) in 16S rRNA + S-adenosyl-L-methionine = N(4)-methylcytidine(1402) in 16S rRNA + S-adenosyl-L-homocysteine + H(+). Specifically methylates the N4 position of cytidine in position 1402 (C1402) of 16S rRNA. The protein is Ribosomal RNA small subunit methyltransferase H of Bacillus cereus (strain G9842).